The following is a 1680-amino-acid chain: Alpha-protein kinase 3 (1680 aa).

The tract at residues 1–37 is disordered; the sequence is MGSRRAAGRGWGLGGRAGAGGDSEDDGPVWTPGPASR. Positions 9–21 are enriched in gly residues; that stretch reads RGWGLGGRAGAGG. The 97-residue stretch at 77–173 folds into the Ig-like 1 domain; sequence PLFETTLKSR…SGVLEVGTMT (97 aa). Ser229 is subject to Phosphoserine. Disordered stretches follow at residues 237–288, 302–759, 785–950, 1078–1128, and 1147–1244; these read STPV…NGED, ELGP…CPRE, SEEA…GTRS, EGSA…LTGL, and PKVR…QRKA. Positions 320–337 are enriched in basic and acidic residues; the sequence is KDEESKPGEQKLELEKAE. The segment covering 339 to 353 has biased composition (polar residues); sequence SQCSSENVVPSTDKP. Pro residues predominate over residues 402 to 426; sequence APAPAPVPAPALAPAPVPVPAPTPV. A compositionally biased stretch (low complexity) spans 514-532; sequence ESTTTSLSSQTSESMAQSL. 2 stretches are compositionally biased toward polar residues: residues 557 to 566 and 731 to 744; these read SPLQGQTSHK and ETQSEQLSMASLSS. A compositionally biased stretch (basic and acidic residues) spans 785–796; sequence SEEAAFRSHEDG. Residues 917–932 are compositionally biased toward polar residues; it reads SPTQSHPPEAMATSSE. 2 stretches are compositionally biased toward basic and acidic residues: residues 1087-1111 and 1151-1165; these read ERTSQESDKKGLLGEVEGHTVESRT and AGSDGEANKAEERES. Ser1199 is modified (phosphoserine). The segment covering 1231-1244 has biased composition (basic and acidic residues); the sequence is DEGKQEALAKQRKA. Positions 1251–1339 constitute an Ig-like 2 domain; that stretch reads PQVIRKIRVE…GSASTDFCLS (89 aa). Cys1273 and Cys1323 are disulfide-bonded. The 234-residue stretch at 1367 to 1600 folds into the Alpha-type protein kinase domain; it reads KGLADSGCWG…YCDMLGLKPL (234 aa). The disordered stretch occupies residues 1603–1680; the sequence is PEAAHPQAKA…DGSSKAQSMR (78 aa). Composition is skewed to polar residues over residues 1639 to 1660 and 1671 to 1680; these read PQGSRKSAPSSRATLQASQAAT and DGSSKAQSMR.

This sequence belongs to the protein kinase superfamily. Alpha-type protein kinase family. ALPK subfamily. Expressed in the heart and skeletal muscle of adult mice.

It is found in the nucleus. The catalysed reaction is L-seryl-[protein] + ATP = O-phospho-L-seryl-[protein] + ADP + H(+). It carries out the reaction L-threonyl-[protein] + ATP = O-phospho-L-threonyl-[protein] + ADP + H(+). Its function is as follows. Involved in cardiomyocyte differentiation. This chain is Alpha-protein kinase 3, found in Mus musculus (Mouse).